The primary structure comprises 237 residues: RNA polymerase sigma-28 factor (237 aa).

A propeptide spanning residues M1 to S19 is cleaved from the precursor. The Polymerase core binding motif lies at D77 to I90. The H-T-H motif DNA-binding region spans Q197–I206.

The protein belongs to the sigma-70 factor family. Post-translationally, proteolytically cleaved in the N-terminus probably by a SpoIIGA homolog to yield the active peptide.

Sigma factors are initiation factors that promote the attachment of RNA polymerase to specific initiation sites and are then released. This sigma factor directs the transcription of crystal protein genes, a sporulation-regulated event. The polypeptide is RNA polymerase sigma-28 factor (sigK) (Bacillus thuringiensis subsp. kurstaki).